Here is a 418-residue protein sequence, read N- to C-terminus: Glutamyl-tRNA reductase (418 aa).

Substrate-binding positions include 49–52, serine 109, 114–116, and glutamine 120; these read TCNR and EPQ. Cysteine 50 acts as the Nucleophile in catalysis. An NADP(+)-binding site is contributed by 189–194; it reads GAGETI.

Belongs to the glutamyl-tRNA reductase family. As to quaternary structure, homodimer.

The enzyme catalyses (S)-4-amino-5-oxopentanoate + tRNA(Glu) + NADP(+) = L-glutamyl-tRNA(Glu) + NADPH + H(+). Its pathway is porphyrin-containing compound metabolism; protoporphyrin-IX biosynthesis; 5-aminolevulinate from L-glutamyl-tRNA(Glu): step 1/2. Functionally, catalyzes the NADPH-dependent reduction of glutamyl-tRNA(Glu) to glutamate 1-semialdehyde (GSA). This Escherichia coli O9:H4 (strain HS) protein is Glutamyl-tRNA reductase.